Here is a 268-residue protein sequence, read N- to C-terminus: Diaminopimelate epimerase (268 aa).

Substrate is bound by residues Asn-13, Gln-46, and Asn-64. Residue Cys-73 is the Proton donor of the active site. Substrate contacts are provided by residues 74-75, Asn-148, Asn-181, and 199-200; these read GN and ER. Catalysis depends on Cys-208, which acts as the Proton acceptor. Residue 209–210 coordinates substrate; the sequence is GT.

This sequence belongs to the diaminopimelate epimerase family. Homodimer.

The protein localises to the cytoplasm. The catalysed reaction is (2S,6S)-2,6-diaminopimelate = meso-2,6-diaminopimelate. It functions in the pathway amino-acid biosynthesis; L-lysine biosynthesis via DAP pathway; DL-2,6-diaminopimelate from LL-2,6-diaminopimelate: step 1/1. Catalyzes the stereoinversion of LL-2,6-diaminopimelate (L,L-DAP) to meso-diaminopimelate (meso-DAP), a precursor of L-lysine and an essential component of the bacterial peptidoglycan. In Sphingopyxis alaskensis (strain DSM 13593 / LMG 18877 / RB2256) (Sphingomonas alaskensis), this protein is Diaminopimelate epimerase.